We begin with the raw amino-acid sequence, 85 residues long: Small ribosomal subunit protein uS17 (85 aa).

The protein belongs to the universal ribosomal protein uS17 family. Part of the 30S ribosomal subunit.

In terms of biological role, one of the primary rRNA binding proteins, it binds specifically to the 5'-end of 16S ribosomal RNA. In Spiroplasma citri, this protein is Small ribosomal subunit protein uS17.